The sequence spans 182 residues: Small ribosomal subunit protein uS4c (182 aa).

The disordered stretch occupies residues Leu-8–Gln-36. The region spanning Met-82–Asn-143 is the S4 RNA-binding domain.

This sequence belongs to the universal ribosomal protein uS4 family. In terms of assembly, part of the 30S ribosomal subunit. Contacts protein S5. The interaction surface between S4 and S5 is involved in control of translational fidelity.

The protein localises to the plastid. It localises to the chloroplast. In terms of biological role, one of the primary rRNA binding proteins, it binds directly to 16S rRNA where it nucleates assembly of the body of the 30S subunit. Its function is as follows. With S5 and S12 plays an important role in translational accuracy. The polypeptide is Small ribosomal subunit protein uS4c (rps4) (Dietes robinsoniana (Lord Howe wedding lily)).